The sequence spans 269 residues: Small ribosomal subunit protein uS2 (269 aa).

A disordered region spans residues 228–269 (QLDSDDDYEEFDESLAEGDYDDYDEEEDEDSETVSSQEGEEE). Acidic residues predominate over residues 230 to 269 (DSDDDYEEFDESLAEGDYDDYDEEEDEDSETVSSQEGEEE).

Belongs to the universal ribosomal protein uS2 family.

The sequence is that of Small ribosomal subunit protein uS2 from Crocosphaera subtropica (strain ATCC 51142 / BH68) (Cyanothece sp. (strain ATCC 51142)).